The primary structure comprises 232 residues: Chalcone--flavanone isomerase (232 aa).

Substrate-binding residues include threonine 50 and serine 192.

The protein belongs to the chalcone isomerase family.

The enzyme catalyses a chalcone = a flavanone.. It participates in secondary metabolite biosynthesis; flavonoid biosynthesis. Its function is as follows. Catalyzes the intramolecular cyclization of bicyclic chalcones into tricyclic (S)-flavanones. Responsible for the isomerization of 4,2',4',6'-tetrahydroxychalcone (also termed chalcone) into naringenin. This Saussurea medusa (Saw-wort) protein is Chalcone--flavanone isomerase (CHI).